Reading from the N-terminus, the 177-residue chain is Large ribosomal subunit protein uL6 (177 aa).

It belongs to the universal ribosomal protein uL6 family. As to quaternary structure, part of the 50S ribosomal subunit.

Functionally, this protein binds to the 23S rRNA, and is important in its secondary structure. It is located near the subunit interface in the base of the L7/L12 stalk, and near the tRNA binding site of the peptidyltransferase center. The protein is Large ribosomal subunit protein uL6 of Novosphingobium aromaticivorans (strain ATCC 700278 / DSM 12444 / CCUG 56034 / CIP 105152 / NBRC 16084 / F199).